The chain runs to 472 residues: MFEVVIGLEVHTQLNTKTKIFCSCATSFGEAPNTNVCPTCLALPGALPVLNEEAVKKAIAFGKAVNAAINKKSVFNRKNYFYPDLPKAYQISQFDIPIVEKGELFINVKGENKRIGITRAHLEEDAGKNIHENNFSKVDLNRAGTPLLEIVSEPELRSSDEAVAYLKKLHSIIRFLDISDANMQEGSFRCDANVSIRPKGDTKLYTRVEIKNLNSFRFIQKAIEYEVKRQSEAWEDGTYEQEVVQETRLFDTTNLVTRSMRGKEEAAEYRYFPDPDLLPVLLKDEFLDIKIPELPDEKKARFIDELGIKESDAEVLISSLEMSRFFESLISQNLNPKLCVNWLNTELMGLLKGELTIENSPVDAQKLGVLIKRIEDGTISAKAAKDVLAFVFENTSVEIDEAIEKLGLKQVSDDSAIEAVIEQILNANANKVAEYKSGKDKLFGFFVGQTMKEGKGAFNPAKVNEILKTKLG.

Belongs to the GatB/GatE family. GatB subfamily. As to quaternary structure, heterotrimer of A, B and C subunits.

The catalysed reaction is L-glutamyl-tRNA(Gln) + L-glutamine + ATP + H2O = L-glutaminyl-tRNA(Gln) + L-glutamate + ADP + phosphate + H(+). The enzyme catalyses L-aspartyl-tRNA(Asn) + L-glutamine + ATP + H2O = L-asparaginyl-tRNA(Asn) + L-glutamate + ADP + phosphate + 2 H(+). Its function is as follows. Allows the formation of correctly charged Asn-tRNA(Asn) or Gln-tRNA(Gln) through the transamidation of misacylated Asp-tRNA(Asn) or Glu-tRNA(Gln) in organisms which lack either or both of asparaginyl-tRNA or glutaminyl-tRNA synthetases. The reaction takes place in the presence of glutamine and ATP through an activated phospho-Asp-tRNA(Asn) or phospho-Glu-tRNA(Gln). In Campylobacter jejuni subsp. jejuni serotype O:23/36 (strain 81-176), this protein is Aspartyl/glutamyl-tRNA(Asn/Gln) amidotransferase subunit B.